The following is a 258-amino-acid chain: Protein UL24 homolog (258 aa).

Belongs to the herpesviridae UL24 family.

It is found in the virion. The protein localises to the host cytoplasm. The protein resides in the host nucleus. It localises to the host nucleolus. Its subcellular location is the host Golgi apparatus. Functionally, may participate in nuclear egress of viral particles. Plays a role in the dispersal of several host nucleolar proteins including NCL/nucleolin and NPM1. Since deletion of host NCL/nucleolin negatively impact on nuclear egress, UL24 supposedly acts on this process through its effect on host nucleoli. This is Protein UL24 homolog from Homo sapiens (Human).